Reading from the N-terminus, the 391-residue chain is S-adenosylmethionine synthase (391 aa).

H19 contacts ATP. Residue D21 coordinates Mg(2+). Residue E47 coordinates K(+). L-methionine-binding residues include E60 and Q103. The interval 103-113 is flexible loop; it reads QSADIAQGVDR. Residues 168–170, 236–237, D245, 251–252, A268, and K272 contribute to the ATP site; these read DGK, RF, and RK. An L-methionine-binding site is contributed by D245. L-methionine is bound at residue K276.

This sequence belongs to the AdoMet synthase family. Homotetramer; dimer of dimers. Mg(2+) is required as a cofactor. K(+) serves as cofactor.

The protein localises to the cytoplasm. It catalyses the reaction L-methionine + ATP + H2O = S-adenosyl-L-methionine + phosphate + diphosphate. It functions in the pathway amino-acid biosynthesis; S-adenosyl-L-methionine biosynthesis; S-adenosyl-L-methionine from L-methionine: step 1/1. Its function is as follows. Catalyzes the formation of S-adenosylmethionine (AdoMet) from methionine and ATP. The overall synthetic reaction is composed of two sequential steps, AdoMet formation and the subsequent tripolyphosphate hydrolysis which occurs prior to release of AdoMet from the enzyme. The sequence is that of S-adenosylmethionine synthase from Nitratidesulfovibrio vulgaris (strain ATCC 29579 / DSM 644 / CCUG 34227 / NCIMB 8303 / VKM B-1760 / Hildenborough) (Desulfovibrio vulgaris).